A 282-amino-acid chain; its full sequence is MNIAELYGKMGKHSWRIMDAIFKNLWDYEYVPLQLISSHARIGEEKARNILKYLSDLRVVQNRQKDYEGSTFTFIGLSLYSLHRLVRSGKVDAIGKLMGEGKESAVFNCYSEKFGECVVKFHKVGHTSFKKVKEKRDYGDLHFSVLAIRSARNEFRALQKLQGLAVPKVYAWEGNAVLMELIDAKELYRVRVENPDEVLDMILEEVAKFYHRGIVHGDLSQYNVLVSEEGIWIIDFPQSVEVGEEGWREILERDVRNIITYFSRTYRTEKDINSAIDRILQE.

A Protein kinase domain is found at 92–282 (DAIGKLMGEG…NSAIDRILQE (191 aa)). Residues 98 to 106 (MGEGKESAV), K120, and H126 each bind ATP. E103 lines the Mg(2+) pocket. S128 is subject to Phosphoserine; by autocatalysis. 180 to 186 (ELIDAKE) lines the ATP pocket. Residue D218 is the Proton acceptor of the active site. ATP contacts are provided by Y222, N223, and D235. Mg(2+) contacts are provided by N223 and D235.

Belongs to the protein kinase superfamily. RIO-type Ser/Thr kinase family. As to quaternary structure, monomer. Mg(2+) serves as cofactor. It depends on Mn(2+) as a cofactor. Post-translationally, autophosphorylated.

The catalysed reaction is L-seryl-[protein] + ATP = O-phospho-L-seryl-[protein] + ADP + H(+). It catalyses the reaction L-threonyl-[protein] + ATP = O-phospho-L-threonyl-[protein] + ADP + H(+). The chain is RIO-type serine/threonine-protein kinase Rio2 (rio2) from Archaeoglobus fulgidus (strain ATCC 49558 / DSM 4304 / JCM 9628 / NBRC 100126 / VC-16).